Here is a 287-residue protein sequence, read N- to C-terminus: Ribosomal RNA small subunit methyltransferase I (287 aa).

This sequence belongs to the methyltransferase superfamily. RsmI family.

The protein resides in the cytoplasm. The catalysed reaction is cytidine(1402) in 16S rRNA + S-adenosyl-L-methionine = 2'-O-methylcytidine(1402) in 16S rRNA + S-adenosyl-L-homocysteine + H(+). Catalyzes the 2'-O-methylation of the ribose of cytidine 1402 (C1402) in 16S rRNA. The polypeptide is Ribosomal RNA small subunit methyltransferase I (Streptococcus pyogenes serotype M1).